Consider the following 107-residue polypeptide: Rhodocoxin (107 aa).

Residues proline 2–glutamine 106 form the 2Fe-2S ferredoxin-type domain. Residues cysteine 40, cysteine 46, cysteine 49, and cysteine 87 each contribute to the [2Fe-2S] cluster site.

It belongs to the adrenodoxin/putidaredoxin family. It depends on [2Fe-2S] cluster as a cofactor.

Ferredoxin-type protein which transfers electrons from rhodocoxin reductase to cytochrome CYP116 (ThcB), which is involved in the degradation of thiocarbamate herbicides. The sequence is that of Rhodocoxin (thcC) from Rhodococcus erythropolis (Arthrobacter picolinophilus).